Reading from the N-terminus, the 369-residue chain is Serpentine receptor class epsilon-2 (369 aa).

Residues 1–20 lie on the Extracellular side of the membrane; the sequence is MLIQYHKISNNDPNRIQLLS. The helical transmembrane segment at 21–41 threads the bilayer; that stretch reads MIFCEIILLIFELFEFAAIIF. Over 42–55 the chain is Cytoplasmic; it reads NMSRYQFHFNLKVV. The chain crosses the membrane as a helical span at residues 56-76; it reads VGYAIFAYWFDIIARITIAFF. At 77-118 the chain is on the extracellular side; it reads EIGLFNLDDQTIAVETEKLPWNYKNMFFMLLFCCSTYRVYFM. A helical membrane pass occupies residues 119-139; it reads FLICSVTLLLAVERFLATIWV. Over 140–148 the chain is Cytoplasmic; sequence STYESVQHK. The helical transmembrane segment at 149 to 169 threads the bilayer; that stretch reads WVSIVLTSTNSIAGIFGSLLF. The Extracellular segment spans residues 170–178; it reads HYELIFDTA. The chain crosses the membrane as a helical span at residues 179–199; that stretch reads VWCSLGLCFNFVSIFLYVILF. The Cytoplasmic portion of the chain corresponds to 200 to 234; the sequence is NSNKSKIELCQTREITQSYTLSLRFQLNENLKIMN. Residues 235 to 255 form a helical membrane-spanning segment; that stretch reads WIKNSILVVTCFNTLLAGFLI. Topologically, residues 256–274 are extracellular; that stretch reads ASNNEYLKNDYPVLVKCCH. Residues 275–295 traverse the membrane as a helical segment; sequence TFLNLGIAIYAQVVFFVAILA. The Cytoplasmic portion of the chain corresponds to 296-369; it reads DRHFRTYFLR…VAKKKRFWRV (74 aa).

The protein belongs to the nematode receptor-like protein sre family.

The protein localises to the cell membrane. The chain is Serpentine receptor class epsilon-2 (sre-2) from Caenorhabditis elegans.